Consider the following 82-residue polypeptide: DNA-directed RNA polymerase subunit omega (82 aa).

This sequence belongs to the RNA polymerase subunit omega family. The RNAP catalytic core consists of 2 alpha, 1 beta, 1 beta' and 1 omega subunit. When a sigma factor is associated with the core the holoenzyme is formed, which can initiate transcription.

It catalyses the reaction RNA(n) + a ribonucleoside 5'-triphosphate = RNA(n+1) + diphosphate. In terms of biological role, promotes RNA polymerase assembly. Latches the N- and C-terminal regions of the beta' subunit thereby facilitating its interaction with the beta and alpha subunits. This Lacticaseibacillus casei (strain BL23) (Lactobacillus casei) protein is DNA-directed RNA polymerase subunit omega.